A 362-amino-acid chain; its full sequence is Phosphoserine aminotransferase (362 aa).

The L-glutamate site is built by S9 and R42. Residues 76-77, W102, T153, D174, and Q197 each bind pyridoxal 5'-phosphate; that span reads GR. At K198 the chain carries N6-(pyridoxal phosphate)lysine. 239-240 is a pyridoxal 5'-phosphate binding site; the sequence is NT.

Belongs to the class-V pyridoxal-phosphate-dependent aminotransferase family. SerC subfamily. In terms of assembly, homodimer. Pyridoxal 5'-phosphate serves as cofactor.

The protein resides in the cytoplasm. It catalyses the reaction O-phospho-L-serine + 2-oxoglutarate = 3-phosphooxypyruvate + L-glutamate. It carries out the reaction 4-(phosphooxy)-L-threonine + 2-oxoglutarate = (R)-3-hydroxy-2-oxo-4-phosphooxybutanoate + L-glutamate. It functions in the pathway amino-acid biosynthesis; L-serine biosynthesis; L-serine from 3-phospho-D-glycerate: step 2/3. The protein operates within cofactor biosynthesis; pyridoxine 5'-phosphate biosynthesis; pyridoxine 5'-phosphate from D-erythrose 4-phosphate: step 3/5. Functionally, catalyzes the reversible conversion of 3-phosphohydroxypyruvate to phosphoserine and of 3-hydroxy-2-oxo-4-phosphonooxybutanoate to phosphohydroxythreonine. This is Phosphoserine aminotransferase from Klebsiella pneumoniae subsp. pneumoniae (strain ATCC 700721 / MGH 78578).